A 1097-amino-acid chain; its full sequence is DNA-directed RNA polymerase subunit beta (1097 aa).

Belongs to the RNA polymerase beta chain family. As to quaternary structure, in plastids the minimal PEP RNA polymerase catalytic core is composed of four subunits: alpha, beta, beta', and beta''. When a (nuclear-encoded) sigma factor is associated with the core the holoenzyme is formed, which can initiate transcription.

It is found in the plastid. The protein localises to the chloroplast. The enzyme catalyses RNA(n) + a ribonucleoside 5'-triphosphate = RNA(n+1) + diphosphate. In terms of biological role, DNA-dependent RNA polymerase catalyzes the transcription of DNA into RNA using the four ribonucleoside triphosphates as substrates. This chain is DNA-directed RNA polymerase subunit beta, found in Rhodomonas salina (Cryptomonas salina).